We begin with the raw amino-acid sequence, 175 residues long: Small ribosomal subunit protein uS5 (175 aa).

The region spanning 19 to 82 (WQERVIQIRR…ADGKKHLIDI (64 aa)) is the S5 DRBM domain.

The protein belongs to the universal ribosomal protein uS5 family. Part of the 30S ribosomal subunit. Contacts proteins S4 and S8.

In terms of biological role, with S4 and S12 plays an important role in translational accuracy. Located at the back of the 30S subunit body where it stabilizes the conformation of the head with respect to the body. The polypeptide is Small ribosomal subunit protein uS5 (Nostoc punctiforme (strain ATCC 29133 / PCC 73102)).